The following is a 275-amino-acid chain: 3-methyl-2-oxobutanoate hydroxymethyltransferase (275 aa).

Residues D44 and D83 each contribute to the Mg(2+) site. Residues 44–45 (DS), D83, and K113 each bind 3-methyl-2-oxobutanoate. E115 is a Mg(2+) binding site. E182 acts as the Proton acceptor in catalysis.

The protein belongs to the PanB family. In terms of assembly, homodecamer; pentamer of dimers. The cofactor is Mg(2+).

Its subcellular location is the cytoplasm. It catalyses the reaction 3-methyl-2-oxobutanoate + (6R)-5,10-methylene-5,6,7,8-tetrahydrofolate + H2O = 2-dehydropantoate + (6S)-5,6,7,8-tetrahydrofolate. The protein operates within cofactor biosynthesis; (R)-pantothenate biosynthesis; (R)-pantoate from 3-methyl-2-oxobutanoate: step 1/2. Functionally, catalyzes the reversible reaction in which hydroxymethyl group from 5,10-methylenetetrahydrofolate is transferred onto alpha-ketoisovalerate to form ketopantoate. In Clostridium botulinum (strain 657 / Type Ba4), this protein is 3-methyl-2-oxobutanoate hydroxymethyltransferase.